The chain runs to 270 residues: Dermonecrotic toxin LhSicTox-alphaIA2aiii (270 aa).

His2 is a catalytic residue. Glu22 and Asp24 together coordinate Mg(2+). His38 (nucleophile) is an active-site residue. 2 disulfide bridges follow: Cys42–Cys48 and Cys44–Cys187. Asp82 serves as a coordination point for Mg(2+).

This sequence belongs to the arthropod phospholipase D family. Class II subfamily. Mg(2+) is required as a cofactor. As to expression, expressed by the venom gland.

It localises to the secreted. The catalysed reaction is an N-(acyl)-sphingosylphosphocholine = an N-(acyl)-sphingosyl-1,3-cyclic phosphate + choline. It catalyses the reaction an N-(acyl)-sphingosylphosphoethanolamine = an N-(acyl)-sphingosyl-1,3-cyclic phosphate + ethanolamine. It carries out the reaction a 1-acyl-sn-glycero-3-phosphocholine = a 1-acyl-sn-glycero-2,3-cyclic phosphate + choline. The enzyme catalyses a 1-acyl-sn-glycero-3-phosphoethanolamine = a 1-acyl-sn-glycero-2,3-cyclic phosphate + ethanolamine. In terms of biological role, dermonecrotic toxins cleave the phosphodiester linkage between the phosphate and headgroup of certain phospholipids (sphingolipid and lysolipid substrates), forming an alcohol (often choline) and a cyclic phosphate. This toxin acts on sphingomyelin (SM). It may also act on ceramide phosphoethanolamine (CPE), lysophosphatidylcholine (LPC) and lysophosphatidylethanolamine (LPE), but not on lysophosphatidylserine (LPS), and lysophosphatidylglycerol (LPG). It acts by transphosphatidylation, releasing exclusively cyclic phosphate products as second products. Induces dermonecrosis, hemolysis, increased vascular permeability, edema, inflammatory response, and platelet aggregation. The protein is Dermonecrotic toxin LhSicTox-alphaIA2aiii of Loxosceles hirsuta (Recluse spider).